Here is a 228-residue protein sequence, read N- to C-terminus: uncharacterized protein (228 aa).

A signal peptide spans 1-28 (MRKKRVITCVMAASLTLGSLLPAGYASA).

This is an uncharacterized protein from Bacillus subtilis (strain 168).